The sequence spans 278 residues: Large ribosomal subunit protein uL2 (278 aa).

Residues 201–278 form a disordered region; sequence HGNINDGKAG…IMRSRHQRKK (78 aa). The span at 210-221 shows a compositional bias: basic residues; that stretch reads GRSRWRGKRPHV.

Belongs to the universal ribosomal protein uL2 family. As to quaternary structure, part of the 50S ribosomal subunit. Forms a bridge to the 30S subunit in the 70S ribosome.

Its function is as follows. One of the primary rRNA binding proteins. Required for association of the 30S and 50S subunits to form the 70S ribosome, for tRNA binding and peptide bond formation. It has been suggested to have peptidyltransferase activity; this is somewhat controversial. Makes several contacts with the 16S rRNA in the 70S ribosome. The sequence is that of Large ribosomal subunit protein uL2 from Sinorhizobium fredii (strain NBRC 101917 / NGR234).